The following is a 316-amino-acid chain: Ribosomal RNA large subunit methyltransferase F (316 aa).

Belongs to the methyltransferase superfamily. METTL16/RlmF family.

The protein localises to the cytoplasm. The enzyme catalyses adenosine(1618) in 23S rRNA + S-adenosyl-L-methionine = N(6)-methyladenosine(1618) in 23S rRNA + S-adenosyl-L-homocysteine + H(+). Its function is as follows. Specifically methylates the adenine in position 1618 of 23S rRNA. The polypeptide is Ribosomal RNA large subunit methyltransferase F (Pseudomonas putida (strain GB-1)).